Consider the following 277-residue polypeptide: 3-methyl-2-oxobutanoate hydroxymethyltransferase (277 aa).

Mg(2+) is bound by residues Asp43 and Asp82. Residues 43-44 (DS), Asp82, and Lys112 each bind 3-methyl-2-oxobutanoate. Glu114 serves as a coordination point for Mg(2+). Glu181 (proton acceptor) is an active-site residue.

It belongs to the PanB family. In terms of assembly, homodecamer; pentamer of dimers. Mg(2+) serves as cofactor.

The protein localises to the cytoplasm. It carries out the reaction 3-methyl-2-oxobutanoate + (6R)-5,10-methylene-5,6,7,8-tetrahydrofolate + H2O = 2-dehydropantoate + (6S)-5,6,7,8-tetrahydrofolate. It functions in the pathway cofactor biosynthesis; (R)-pantothenate biosynthesis; (R)-pantoate from 3-methyl-2-oxobutanoate: step 1/2. Functionally, catalyzes the reversible reaction in which hydroxymethyl group from 5,10-methylenetetrahydrofolate is transferred onto alpha-ketoisovalerate to form ketopantoate. The chain is 3-methyl-2-oxobutanoate hydroxymethyltransferase from Bacillus velezensis (strain DSM 23117 / BGSC 10A6 / LMG 26770 / FZB42) (Bacillus amyloliquefaciens subsp. plantarum).